A 374-amino-acid polypeptide reads, in one-letter code: Peptide chain release factor 2 (374 aa).

Gln-249 carries the post-translational modification N5-methylglutamine.

Belongs to the prokaryotic/mitochondrial release factor family. In terms of processing, methylated by PrmC. Methylation increases the termination efficiency of RF2.

The protein resides in the cytoplasm. In terms of biological role, peptide chain release factor 2 directs the termination of translation in response to the peptide chain termination codons UGA and UAA. The chain is Peptide chain release factor 2 from Ruegeria sp. (strain TM1040) (Silicibacter sp.).